The primary structure comprises 245 residues: NAD-dependent protein deacetylase (245 aa).

A Deacetylase sirtuin-type domain is found at 1-245 (MIFVQQFEEV…EFVEGLSSMK (245 aa)). The NAD(+) site is built by Ala26, Thr30, Phe37, Arg38, Gln105, Ile107, Asp108, and His123. Residue Phe37 participates in nicotinamide binding. Residues Ile107 and Asp108 each contribute to the nicotinamide site. The active-site Proton acceptor is the His123. Positions 131, 134, 151, and 154 each coordinate Zn(2+). NAD(+) contacts are provided by Thr190, Ser191, Asn216, and Ile234.

Belongs to the sirtuin family. Class U subfamily. Zn(2+) is required as a cofactor.

The protein localises to the cytoplasm. It catalyses the reaction N(6)-acetyl-L-lysyl-[protein] + NAD(+) + H2O = 2''-O-acetyl-ADP-D-ribose + nicotinamide + L-lysyl-[protein]. NAD-dependent protein deacetylase which modulates the activities of several enzymes which are inactive in their acetylated form. The protein is NAD-dependent protein deacetylase of Bacillus cereus (strain ATCC 14579 / DSM 31 / CCUG 7414 / JCM 2152 / NBRC 15305 / NCIMB 9373 / NCTC 2599 / NRRL B-3711).